The primary structure comprises 347 residues: Probable dual-specificity RNA methyltransferase RlmN (347 aa).

Glutamate 91 acts as the Proton acceptor in catalysis. Positions 97-327 (YKYGNSICVS…ATVRREMGSD (231 aa)) constitute a Radical SAM core domain. Residues cysteine 104 and cysteine 332 are joined by a disulfide bond. The [4Fe-4S] cluster site is built by cysteine 111, cysteine 115, and cysteine 118. S-adenosyl-L-methionine-binding positions include 158–159 (GE), serine 190, 213–215 (SLH), and asparagine 289. Catalysis depends on cysteine 332, which acts as the S-methylcysteine intermediate.

It belongs to the radical SAM superfamily. RlmN family. The cofactor is [4Fe-4S] cluster.

It localises to the cytoplasm. It catalyses the reaction adenosine(2503) in 23S rRNA + 2 reduced [2Fe-2S]-[ferredoxin] + 2 S-adenosyl-L-methionine = 2-methyladenosine(2503) in 23S rRNA + 5'-deoxyadenosine + L-methionine + 2 oxidized [2Fe-2S]-[ferredoxin] + S-adenosyl-L-homocysteine. It carries out the reaction adenosine(37) in tRNA + 2 reduced [2Fe-2S]-[ferredoxin] + 2 S-adenosyl-L-methionine = 2-methyladenosine(37) in tRNA + 5'-deoxyadenosine + L-methionine + 2 oxidized [2Fe-2S]-[ferredoxin] + S-adenosyl-L-homocysteine. Functionally, specifically methylates position 2 of adenine 2503 in 23S rRNA and position 2 of adenine 37 in tRNAs. The chain is Probable dual-specificity RNA methyltransferase RlmN from Clostridium perfringens (strain SM101 / Type A).